Consider the following 220-residue polypeptide: Deoxyribose-phosphate aldolase (220 aa).

The active-site Proton donor/acceptor is the aspartate 89. Residue lysine 151 is the Schiff-base intermediate with acetaldehyde of the active site. The active-site Proton donor/acceptor is lysine 180.

Belongs to the DeoC/FbaB aldolase family. DeoC type 1 subfamily.

It localises to the cytoplasm. The enzyme catalyses 2-deoxy-D-ribose 5-phosphate = D-glyceraldehyde 3-phosphate + acetaldehyde. The protein operates within carbohydrate degradation; 2-deoxy-D-ribose 1-phosphate degradation; D-glyceraldehyde 3-phosphate and acetaldehyde from 2-deoxy-alpha-D-ribose 1-phosphate: step 2/2. Its function is as follows. Catalyzes a reversible aldol reaction between acetaldehyde and D-glyceraldehyde 3-phosphate to generate 2-deoxy-D-ribose 5-phosphate. The polypeptide is Deoxyribose-phosphate aldolase (Staphylococcus saprophyticus subsp. saprophyticus (strain ATCC 15305 / DSM 20229 / NCIMB 8711 / NCTC 7292 / S-41)).